The chain runs to 369 residues: Protein V (369 aa).

Disordered stretches follow at residues 1–24 and 38–320; these read MDQDALISKEDSEVEREASGGRES and SEPT…GHRR. Basic and acidic residues predominate over residues 7–20; that stretch reads ISKEDSEVEREASG. Positions 50 to 61 are enriched in polar residues; sequence LHNTINTLQRPG. 2 stretches are compositionally biased toward basic and acidic residues: residues 99-110 and 150-168; these read AEAHARNVDKQN and GAEDENREMAANPDKRGED. 3 positions are modified to phosphoserine; by host: Ser249, Ser257, and Ser260. 8 residues coordinate Zn(2+): His318, Cys337, Cys341, Cys353, Cys355, Cys358, Cys362, and Cys365.

This sequence belongs to the paramyxoviruses V protein family. As to quaternary structure, interacts with host IFIH1/MDA5 and DHX58/LGP2. Interacts with host IRF3. Interacts with host RIGI regulatory protein (via CARDs domain) and host TRIM25 (via SPRY domain); these interactions prevent TRIM25-mediated ubiquitination of RIG-I and disrupts downstream RIG-I signaling.

The protein localises to the host cytoplasm. Plays an essential role in the inhibition of host immune response. Prevents the establishment of cellular antiviral state by blocking interferon-alpha/beta (IFN-alpha/beta) production and signaling pathway. Interacts with host IFIH1/MDA5 and DHX58/LGP2 to inhibit the transduction pathway involved in the activation of IFN-beta promoter, thus protecting the virus against cell antiviral state. Also interacts with and inhibits host IRF3. Blocks the type I interferon signaling pathway by disrupting the RIG-I signaling pathway. The protein is Protein V (P/V/C) of Sendai virus (strain Hamamatsu) (SeV).